The following is a 149-amino-acid chain: Lipoprotein MlpF (149 aa).

An N-terminal signal peptide occupies residues 1-17 (MKIINILFCLFLLLLNS). Cysteine 18 carries N-palmitoyl cysteine lipidation. Cysteine 18 is lipidated: S-diacylglycerol cysteine. The disordered stretch occupies residues 26-58 (LKNNAQQTKSRGKRDLTQKEATPEKPKSKEELL). A compositionally biased stretch (basic and acidic residues) spans 38 to 58 (KRDLTQKEATPEKPKSKEELL).

It belongs to the Multicopy lipoprotein (Mlp) family.

The protein localises to the cell outer membrane. In terms of biological role, an outer membrane protein that may participate in pathogenesis. Some human Lyme disease patients have antibodies against this protein. The Mlp proteins probably undergo intragenic recombination, generating new alleles. The polypeptide is Lipoprotein MlpF (Borreliella burgdorferi (strain ATCC 35210 / DSM 4680 / CIP 102532 / B31) (Borrelia burgdorferi)).